Consider the following 509-residue polypeptide: Probable aspartic-type endopeptidase CTSD (509 aa).

An N-terminal signal peptide occupies residues 1 to 21 (MQFLWLCLLSAVTLQFTGTLA). Positions 102 to 408 (YFSEVKVGSE…DFDKNRVGLA (307 aa)) constitute a Peptidase A1 domain. D120 is an active-site residue. The N-linked (GlcNAc...) asparagine glycan is linked to N174. The active site involves D302. N-linked (GlcNAc...) asparagine glycosylation is present at N361. A disordered region spans residues 451–489 (NKAPSGGSPGLPAESGSDSTTNGEATNGATSSPNSSSSV). Positions 466 to 480 (GSDSTTNGEATNGAT) are enriched in polar residues. A glycan (N-linked (GlcNAc...) asparagine) is linked at N484. S485 is lipidated: GPI-anchor amidated serine. The propeptide at 486–509 (SSSVLTPTWLTLAVFFAIGSSLWS) is removed in mature form.

Belongs to the peptidase A1 family.

The protein localises to the cell membrane. Its function is as follows. Probable GPI-anchored aspartic-type endopeptidase which contributes to virulence. This is Probable aspartic-type endopeptidase CTSD (CTSD) from Arthroderma benhamiae (strain ATCC MYA-4681 / CBS 112371) (Trichophyton mentagrophytes).